A 512-amino-acid polypeptide reads, in one-letter code: MVAKKPRVVVVGAGISGLAAAHRLCGAGGDRFEVAVVEAGDRVGGRILTSEFAGHRVEMGATWVQGVVGSPVYALARDAGALGEEEGRGLPYERMDGFPDRVLTVAEGGEVVDADTVAGPIEELYRGMMEAARAGEAGGGGGVEEYLRRGLRAYQAARSAGGGGGGGKELEEVDEALLAMHINRERTDTSADDLGDLDLTAEGEYRDFPGEHVTIPGGYSRVVERLAAALPPGTVRLGLRLRRLKWGGTPVRLHFADGAPPLTADHVILTVSLGVLKASLGNKDTAGVGAAAIAFDPPLPPFKREAVARLGFGVVNKLFMEVEAVAPSEPEDVAGVQPAAAGFPFLHMAFRGHVSKIPWWMRGTESICPVHAGSTVALAWFAGREAAHLESLPDDDVIRGAHATLDSFLPAAPRWRVRRIKRSGWATDPLFLGSYSYVAVGSSGDDLDRMAEPLPRGPDAAADERPPSPRLLFAGEATHRTHYSTTHAAYLSGVREANRLLQHYRGGANHTT.

FAD contacts are provided by Glu38 and Arg46. The tract at residues 448–470 is disordered; it reads DRMAEPLPRGPDAAADERPPSPR. Glu476 is a binding site for FAD.

It belongs to the flavin monoamine oxidase family. FAD is required as a cofactor.

The protein resides in the cytoplasm. The enzyme catalyses spermine + O2 + H2O = 3-aminopropanal + spermidine + H2O2. The catalysed reaction is N(1)-acetylspermine + O2 + H2O = 3-acetamidopropanal + spermidine + H2O2. It catalyses the reaction norspermine + O2 + H2O = norspermidine + 3-aminopropanal + H2O2. It carries out the reaction thermospermine + O2 + H2O = 3-aminopropanal + spermidine + H2O2. Its pathway is amine and polyamine degradation; spermine degradation. In terms of biological role, flavoenzyme involved in polyamine back-conversion. Catalyzes the oxidation of the secondary amino group of polyamines, such as spermine and its acetyl derivatives. Substrate preference is thermospermine &gt; spermine &gt; norspermine &gt; N(1)-acetylspermine. No activity detected when putrescine or spermidine are used as substrates. Plays an important role in the regulation of polyamine intracellular concentration. This is Polyamine oxidase 1 from Oryza sativa subsp. japonica (Rice).